The primary structure comprises 297 residues: Ribonuclease HIII (297 aa).

The RNase H type-2 domain occupies 81–297 (IPIIGTDEVG…NTKKAQALLK (217 aa)). 3 residues coordinate a divalent metal cation: D87, E88, and D192.

The protein belongs to the RNase HII family. RnhC subfamily. Requires Mn(2+) as cofactor. It depends on Mg(2+) as a cofactor.

It localises to the cytoplasm. The catalysed reaction is Endonucleolytic cleavage to 5'-phosphomonoester.. Functionally, endonuclease that specifically degrades the RNA of RNA-DNA hybrids. The polypeptide is Ribonuclease HIII (Streptococcus agalactiae serotype III (strain NEM316)).